An 860-amino-acid polypeptide reads, in one-letter code: Alanine--tRNA ligase (860 aa).

The Zn(2+) site is built by His-563, His-567, Cys-665, and His-669.

Belongs to the class-II aminoacyl-tRNA synthetase family. Zn(2+) serves as cofactor.

It localises to the cytoplasm. It catalyses the reaction tRNA(Ala) + L-alanine + ATP = L-alanyl-tRNA(Ala) + AMP + diphosphate. Catalyzes the attachment of alanine to tRNA(Ala) in a two-step reaction: alanine is first activated by ATP to form Ala-AMP and then transferred to the acceptor end of tRNA(Ala). Also edits incorrectly charged Ser-tRNA(Ala) and Gly-tRNA(Ala) via its editing domain. The sequence is that of Alanine--tRNA ligase from Vibrio cholerae serotype O1 (strain ATCC 39315 / El Tor Inaba N16961).